The following is a 208-amino-acid chain: MKVVEVKHPLIKHKIGLMREGDISTKRFRELATEVGSLLTYEATADFETEKVTIEGWNGPVEIDQIKGKKVTVVPILRAGLGMMDGVLEHVPSARISVVGVYRDEETLEPVPYFNKLASNIDERIALVVDPMLATGGSMIATLDLLKENGCKQFKVLVLVAAPEGIAALEKAHPDVELYTAAIDEKLNDKGYIIPGLGDAGDKIFGTK.

5-phospho-alpha-D-ribose 1-diphosphate-binding positions include Arg-78, Arg-103, and 130–138 (DPMLATGGS). Residues Ile-193 and 198-200 (GDA) each bind uracil. Position 199 (Asp-199) interacts with 5-phospho-alpha-D-ribose 1-diphosphate.

It belongs to the UPRTase family. It depends on Mg(2+) as a cofactor.

The catalysed reaction is UMP + diphosphate = 5-phospho-alpha-D-ribose 1-diphosphate + uracil. Its pathway is pyrimidine metabolism; UMP biosynthesis via salvage pathway; UMP from uracil: step 1/1. Allosterically activated by GTP. Functionally, catalyzes the conversion of uracil and 5-phospho-alpha-D-ribose 1-diphosphate (PRPP) to UMP and diphosphate. The chain is Uracil phosphoribosyltransferase from Photobacterium profundum (strain SS9).